We begin with the raw amino-acid sequence, 347 residues long: MVRISLDVMGGDYGPEVVIPGAARALERHPDIKFVLFGQEARCTELLAKHPKLQASSTFHDCEIAVGMDEKPSQALRRGRGKSSMWKAIDAINAHEADVVVSAGNTGALMAMSVFCLRTMQGIQRPAIAAIWPTLKGESIVLDVGATIGADAQQLMDFALMGGAMARALFEVERPSVGLLNVGVEEIKGQEEVKEAGRLIREADIEGIEYYGFVEGDDIGRGTVDVVVTEGFSGNIALKAAEGTARQIAEYLRAAMSRTLLAKIGYIFAKSAFDRLREKMDPRKVNGGVFLGLNGIVIKSHGGADAEGFAAAIDVGYDMVKNGLKAKIEADLARYHGAQASEALPRA.

This sequence belongs to the PlsX family. As to quaternary structure, homodimer. Probably interacts with PlsY.

Its subcellular location is the cytoplasm. It carries out the reaction a fatty acyl-[ACP] + phosphate = an acyl phosphate + holo-[ACP]. Its pathway is lipid metabolism; phospholipid metabolism. Catalyzes the reversible formation of acyl-phosphate (acyl-PO(4)) from acyl-[acyl-carrier-protein] (acyl-ACP). This enzyme utilizes acyl-ACP as fatty acyl donor, but not acyl-CoA. This is Phosphate acyltransferase from Sinorhizobium medicae (strain WSM419) (Ensifer medicae).